Here is a 225-residue protein sequence, read N- to C-terminus: UPF0758 protein BP1235 (225 aa).

The MPN domain occupies Ala103 to Leu225. The Zn(2+) site is built by His174, His176, and Asp187. The JAMM motif motif lies at His174–Asp187.

Belongs to the UPF0758 family.

This Bordetella pertussis (strain Tohama I / ATCC BAA-589 / NCTC 13251) protein is UPF0758 protein BP1235.